Here is an 89-residue protein sequence, read N- to C-terminus: Phytosulfokines 1 (89 aa).

Positions 1 to 22 are cleaved as a signal peptide; that stretch reads MVNPGRTARALCLLCLALLLLG. Positions 23–79 are excised as a propeptide; the sequence is QDTHSRKLLLQEKHSHGVGNGTTTTQEPSRENGGSTGSNNNGQLQFDSAKWEEFHTD. Residues 33 to 68 are disordered; sequence QEKHSHGVGNGTTTTQEPSRENGGSTGSNNNGQLQF. A glycan (N-linked (GlcNAc...) asparagine) is linked at asparagine 42. A sulfotyrosine mark is found at tyrosine 80 and tyrosine 82. Positions 85-89 are excised as a propeptide; that stretch reads DVKNP.

The protein belongs to the phytosulfokine family. Post-translationally, sulfation is important for activity and for the binding to a putative membrane receptor. In terms of processing, PSK-alpha is produced by endopeptidase digestion. PSK-beta is produced from PSK-alpha by exopeptidase digestion. In terms of tissue distribution, expressed throughout the seedling. More abundant in fragments containing shoot or root apexes where cells proliferate vigorously.

It localises to the secreted. Promotes plant cell differentiation, organogenesis and somatic embryogenesis as well as cell proliferation. This Oryza sativa subsp. indica (Rice) protein is Phytosulfokines 1 (PSK1).